Reading from the N-terminus, the 131-residue chain is Probable lactoylglutathione lyase (131 aa).

Positions 2–126 (FLLHTMIRVG…DGYKIELIQT (125 aa)) constitute a VOC domain. His5 is a binding site for Ni(2+). Residue Arg9 participates in substrate binding. Glu56 serves as a coordination point for Ni(2+). Substrate contacts are provided by Asn60 and His74. Residues His74 and Glu122 each coordinate Ni(2+). The active-site Proton donor/acceptor is Glu122.

The protein belongs to the glyoxalase I family. Ni(2+) serves as cofactor.

The catalysed reaction is (R)-S-lactoylglutathione = methylglyoxal + glutathione. Its pathway is secondary metabolite metabolism; methylglyoxal degradation; (R)-lactate from methylglyoxal: step 1/2. Catalyzes the conversion of hemimercaptal, formed from methylglyoxal and glutathione, to S-lactoylglutathione. This chain is Probable lactoylglutathione lyase (gloA), found in Synechocystis sp. (strain ATCC 27184 / PCC 6803 / Kazusa).